The sequence spans 522 residues: Glutamate--cysteine ligase (522 aa).

The protein belongs to the glutamate--cysteine ligase type 1 family. Type 1 subfamily.

It catalyses the reaction L-cysteine + L-glutamate + ATP = gamma-L-glutamyl-L-cysteine + ADP + phosphate + H(+). The protein operates within sulfur metabolism; glutathione biosynthesis; glutathione from L-cysteine and L-glutamate: step 1/2. This Vibrio campbellii (strain ATCC BAA-1116) protein is Glutamate--cysteine ligase.